The chain runs to 284 residues: uncharacterized protein (284 aa).

Residues 1 to 8 (MLWKVSKM) lie on the Cytoplasmic side of the membrane. A helical membrane pass occupies residues 9–25 (FLGGLVALTTISVATLY). The Extracellular portion of the chain corresponds to 26 to 80 (HYQNRLVYPSWAQGARNHVDTPDSRGIPYEKLTLITQDHIKLEAWDIKNENSTST). The helical transmembrane segment at 81-101 (VLILCPNAGNIGYFILIIDIF) threads the bilayer. The Cytoplasmic segment spans residues 102-284 (YRQFGMSVFI…RDFLIEKGFI (183 aa)).

To S.pombe bem46 and M.tuberculosis Rv2307c.

Its subcellular location is the mitochondrion membrane. This is an uncharacterized protein from Saccharomyces cerevisiae (strain ATCC 204508 / S288c) (Baker's yeast).